A 207-amino-acid chain; its full sequence is Gap junction epsilon-1 protein (207 aa).

Topologically, residues 1-22 (MSLNYIKNFYEGCLRPPTVIGQ) are cytoplasmic. Residues 23–43 (FHTLFFGSVRTFFLGVLGFAV) traverse the membrane as a helical segment. The Extracellular portion of the chain corresponds to 44–74 (YGNEALHFSCDPDKRELNLYCYNQFRPITPQ). Disulfide bonds link Cys53/Cys161 and Cys64/Cys147. A helical transmembrane segment spans residues 75 to 95 (VFWALQLVTVLVPGAVFHLYA). Over 96–111 (ACKNIDQEEILHRPMS) the chain is Cytoplasmic. Residues 112-132 (TVFYIISVLLRIILEVLAFWL) form a helical membrane-spanning segment. The Extracellular segment spans residues 133–175 (QSHLFGFLVDPIFMCDVTGLGKILNVSKCMVPEHFEKTIFLSA). Residues 176-196 (MYTFTIITILLCIAEIFEILF) traverse the membrane as a helical segment. The Cytoplasmic segment spans residues 197–207 (RRLGYLNQPMT).

It belongs to the connexin family. Beta-type (group I) subfamily. A connexon is composed of a hexamer of connexins.

It is found in the cell membrane. In terms of biological role, has significant hemichannel activity. However, has only low-efficiency gap junction activity and probably does not function as a gap junction channel in vivo. The sequence is that of Gap junction epsilon-1 protein from Danio rerio (Zebrafish).